A 661-amino-acid chain; its full sequence is DnaJ protein ERDJ2B (661 aa).

Over 1–8 (MAESEENS) the chain is Lumenal. A helical membrane pass occupies residues 9–29 (VLFPIFILTMMAIPLVPYTFV). Residues 30–65 (KLSRAFSKKQRSIHCQCLECDRSGKYKRSISQSISS) are Cytoplasmic-facing. A helical membrane pass occupies residues 66–86 (FTSCSNLTVVLLWIVMIFLIY). Residues 87-190 (HTKNMSRESQ…FILNMNGESG (104 aa)) lie on the Lumenal side of the membrane. A glycan (N-linked (GlcNAc...) asparagine) is linked at N90. In terms of domain architecture, J spans 99-164 (EPFGILGLEP…LSRENFEKYG (66 aa)). The helical transmembrane segment at 191 to 211 (GILLLCTVGLCILLPLVIASI) threads the bilayer. The SEC63 domain maps to 206 to 597 (LVIASIYLWR…IGCDQKTSLK (392 aa)). Residues 212–661 (YLWRSSKYTG…SSEESGSDEE (450 aa)) are Cytoplasmic-facing. Residues 608–661 (EGENAEEGLEEEDDEIEEEDYESEYSEDEEDKKRGSKKKVNKESSSEESGSDEE) form a disordered region. Residues 609–637 (GENAEEGLEEEDDEIEEEDYESEYSEDEE) show a composition bias toward acidic residues.

Interacts with OEP61/TPR7. Expressed in leaves, flower buds and flowers.

It is found in the endoplasmic reticulum membrane. Functionally, required for integral membrane and secreted preprotein translocation across the endoplasmic reticulum membrane. This chain is DnaJ protein ERDJ2B (ERDJ2B), found in Arabidopsis thaliana (Mouse-ear cress).